The following is a 261-amino-acid chain: LIM and SH3 domain protein 1 (261 aa).

At methionine 1 the chain carries N-acetylmethionine. The LIM zinc-binding domain occupies 5–56; that stretch reads CARCGKIVYPTEKVNCLDKFWHKACFHCETCKMTLNMKNYKGYEKKPYCNAH. At lysine 42 the chain carries N6-acetyllysine. Nebulin repeat units lie at residues 61 to 95 and 97 to 131; these read SFTM…KNKG and GFSV…KSRM. The residue at position 68 (threonine 68) is a Phosphothreonine. Lysine 75 carries the post-translational modification N6-methyllysine. Serine 99 bears the Phosphoserine mark. At threonine 104 the chain carries Phosphothreonine. The segment at 111–186 is disordered; sequence KKTQDQISNI…QPVAQSYGGY (76 aa). Lysine 112 carries the N6-succinyllysine modification. Serine 118 is modified (phosphoserine). Positions 121–130 are enriched in basic and acidic residues; sequence KYHEEFEKSR. Residues serine 134 and serine 146 each carry the phosphoserine modification. Positions 167–183 are enriched in low complexity; that stretch reads SAPVYQQPQQQPVAQSY. An SH3 domain is found at 202 to 261; the sequence is GGGKRYRAVYDYSAADEDEVSFQDGDTIVNVQQIDDGWMYGTVERTGDTGMLPANYVEAI.

Interacts with F-actin. Interacts with ANKRD54. Interacts with KBTBD10.

Its subcellular location is the cytoplasm. It is found in the cell cortex. The protein localises to the cytoskeleton. Functionally, plays an important role in the regulation of dynamic actin-based, cytoskeletal activities. Agonist-dependent changes in LASP1 phosphorylation may also serve to regulate actin-associated ion transport activities, not only in the parietal cell but also in certain other F-actin-rich secretory epithelial cell types. The polypeptide is LIM and SH3 domain protein 1 (LASP1) (Homo sapiens (Human)).